Consider the following 170-residue polypeptide: Single-stranded DNA-binding protein (170 aa).

The segment at 1 to 26 (MSNELKQVEQTEEAVVVSETKDYIKV) is oligomerization.

It belongs to the phi29likevirus single-strand-binding protein family. As to quaternary structure, hexamer.

Functionally, single-stranded DNA-binding protein required for the elongation during viral DNA replication by strand displacement. Displaced viral DNA strands are transiently coated with the ssDNA-binding protein and therefore protected againt nucleases. The latter is then probably removed by the replisome that performs lagging strand synthesis or during the events that lead up to the recombination process. Has helix-destabilizing activity since it removes secondary structure from the ssDNA in replicative intermediates. The chain is Single-stranded DNA-binding protein from Bacillus subtilis (Bacteriophage GA-1).